Consider the following 206-residue polypeptide: Cytochrome c (206 aa).

3 helical membrane passes run 10–30 (IALAVGGAVLMGALFFSVSFL), 49–69 (FMGWFLLIFCASIIIMGLGKM), and 76–96 (KWFLSFPLSIFVIVMVMFLSL). The heme site is built by C152, C155, H156, and M182.

In terms of assembly, monomer. Component of the photosynthetic reaction center composed of protein subunits PscA, PscC, PscB and PscD. The reaction center interacts with FmoA (which forms the Fenna-Matthews-Olson (FMO) complex). The reaction center/FmoA complex has two PscA subunits, one PscB and one PscD subunit, probably two FmoA complexes and at least one PscC subunit. In terms of processing, binds 1 heme group per subunit.

The protein resides in the cell inner membrane. In terms of biological role, monoheme cytochrome which is the immediate electron donor to P840 of the photosynthetic reaction center complex. The protein is Cytochrome c (pscC) of Chlorobaculum tepidum (strain ATCC 49652 / DSM 12025 / NBRC 103806 / TLS) (Chlorobium tepidum).